The chain runs to 842 residues: Squamosa promoter-binding-like protein 9 (842 aa).

A compositionally biased stretch (gly residues) spans 1–18 (MDAPGGGGGGGGGGGGVD). Disordered stretches follow at residues 1–22 (MDAPGGGGGGGGGGGGVDAGEP), 59–97 (ALLPPAPSPQPAEAEAEAAGPASLPSSMQAEGSKRRVRK), and 140–168 (RKKPKGAGRGSGAAVGGSGGGASRGTPAE). Residues 69–85 (PAEAEAEAAGPASLPSS) show a composition bias toward low complexity. A compositionally biased stretch (gly residues) spans 146-162 (AGRGSGAAVGGSGGGAS). The SBP-type; atypical zinc-finger motif lies at 168–245 (EMKCQVPGCE…ERHNKRRRRK (78 aa)). Zn(2+)-binding residues include Cys171, Cys176, Cys193, Cys196, Cys212, Cys215, His219, and Cys231. The Bipartite nuclear localization signal motif lies at 228–244 (KRSCRRKLERHNKRRRR). The span at 236–246 (ERHNKRRRRKP) shows a compositional bias: basic residues. Residues 236 to 256 (ERHNKRRRRKPDSKGILEKDI) form a disordered region.

Ubiquitous.

It is found in the nucleus. Trans-acting factor that binds specifically to the consensus nucleotide sequence 5'-TNCGTACAA-3'. The polypeptide is Squamosa promoter-binding-like protein 9 (SPL9) (Oryza sativa subsp. japonica (Rice)).